A 270-amino-acid polypeptide reads, in one-letter code: tRNA pseudouridine synthase A (270 aa).

The Nucleophile role is filled by D51. Y109 contacts substrate.

Belongs to the tRNA pseudouridine synthase TruA family. In terms of assembly, homodimer.

It carries out the reaction uridine(38/39/40) in tRNA = pseudouridine(38/39/40) in tRNA. Functionally, formation of pseudouridine at positions 38, 39 and 40 in the anticodon stem and loop of transfer RNAs. The protein is tRNA pseudouridine synthase A of Burkholderia orbicola (strain MC0-3).